The sequence spans 2439 residues: Centrosomal protein of 290 kDa (2439 aa).

Coiled coils occupy residues 75-913 (AEQA…VVTE) and 1271-1576 (NTML…YMDT). Disordered stretches follow at residues 1802-1824 (ETLNKDLQRSQKSQNKLQSEKEA), 1867-1890 (ELDRKSISEPADKRSTLKEDKSSK), and 2017-2048 (ESRLSKEPPSRPSTSGRGSDTPSQREHEFQKE). A compositionally biased stretch (basic and acidic residues) spans 2039 to 2048 (SQREHEFQKE). Residues 2046-2394 (QKENLRLSTE…KLTQELKHFD (349 aa)) are a coiled coil.

In terms of assembly, part of the tectonic-like complex (also named B9 complex).

The protein localises to the cytoplasm. Its subcellular location is the cytoskeleton. It is found in the microtubule organizing center. It localises to the centrosome. The protein resides in the centriolar satellite. The protein localises to the nucleus. Its subcellular location is the cilium basal body. Involved in early and late steps in cilia formation. May play a role in early ciliogenesis in the disappearance of centriolar satellites and in the transition of primary ciliar vesicles (PCVs) to capped ciliary vesicles (CCVs). In the ciliary transition zone is part of the tectonic-like complex which is required for tissue-specific ciliogenesis and may regulate ciliary membrane composition. Involved in regulation of the BBSome complex integrity and in ciliary targeting of selected BBSome cargos. Required for the correct localization of ciliary and phototransduction proteins in retinal photoreceptor cells; may play a role in ciliary transport processes. Involved in development of the nervous system and kidney. The chain is Centrosomal protein of 290 kDa (cep290) from Danio rerio (Zebrafish).